Here is a 178-residue protein sequence, read N- to C-terminus: ATP-dependent protease subunit HslV (178 aa).

Thr7 is a catalytic residue. Na(+)-binding residues include Gly162, Cys165, and Thr168.

It belongs to the peptidase T1B family. HslV subfamily. As to quaternary structure, a double ring-shaped homohexamer of HslV is capped on each side by a ring-shaped HslU homohexamer. The assembly of the HslU/HslV complex is dependent on binding of ATP.

It localises to the cytoplasm. The catalysed reaction is ATP-dependent cleavage of peptide bonds with broad specificity.. With respect to regulation, allosterically activated by HslU binding. Protease subunit of a proteasome-like degradation complex believed to be a general protein degrading machinery. In Burkholderia multivorans (strain ATCC 17616 / 249), this protein is ATP-dependent protease subunit HslV.